Consider the following 108-residue polypeptide: MDGSYLTHRYCALKRPYTAHLLLLDFSKDEVTKNVWRWKGTDVKLHKMGRKSIVAAVYNQAHPSHPPLYHLGNLNGDKYVASPPSRMKAVSLSFAFTFLYYYFPLPTN.

This is an uncharacterized protein from Saccharomyces cerevisiae (strain ATCC 204508 / S288c) (Baker's yeast).